We begin with the raw amino-acid sequence, 600 residues long: Netrin-1 (600 aa).

Residues 1–24 form the signal peptide; the sequence is MMRAMWEALAALAAVSCLVGAVRG. The Laminin N-terminal domain occupies 47 to 284; sequence HPRRCIPDFV…AVSDLQVGGR (238 aa). N-linked (GlcNAc...) asparagine glycans are attached at residues Asn95, Asn116, and Asn131. 14 disulfides stabilise this stretch: Cys119–Cys152, Cys285–Cys294, Cys287–Cys304, Cys306–Cys315, Cys318–Cys338, Cys341–Cys350, Cys343–Cys368, Cys371–Cys380, Cys383–Cys401, Cys404–Cys416, Cys406–Cys423, Cys425–Cys434, Cys437–Cys451, and Cys472–Cys544. 3 Laminin EGF-like domains span residues 285–340, 341–403, and 404–453; these read CKCN…ECVA, CNCN…ACKA, and CDCH…PCIK. Asn417 carries N-linked (GlcNAc...) asparagine glycosylation. Residues 472–600 form the NTR domain; it reads CDSYCKASKG…KFQQREKKEL (129 aa). The short motif at 530–532 is the Cell attachment site element; that stretch reads RGD.

In terms of assembly, binds to its receptors; DCC, UNC5A, UNC5B, UNC5C and probably UNC5D. Binds to its receptor; DSCAM. Interacts with APP.

The protein resides in the secreted. It localises to the cytoplasm. Netrins control guidance of CNS commissural axons and peripheral motor axons. Its association with either DCC or some UNC5 receptors will lead to axon attraction or repulsion, respectively. Binding to UNC5C might cause dissociation of UNC5C from polymerized TUBB3 in microtubules and thereby lead to increased microtubule dynamics and axon repulsion. Involved in dorsal root ganglion axon projection towards the spinal cord. It also serves as a survival factor via its association with its receptors which prevent the initiation of apoptosis. Involved in colorectal tumorigenesis by regulating apoptosis. This is Netrin-1 (NTN1) from Sus scrofa (Pig).